We begin with the raw amino-acid sequence, 547 residues long: Chaperonin GroEL (547 aa).

ATP contacts are provided by residues 30-33 (TLGP), lysine 51, 87-91 (DGTTT), glycine 415, 479-481 (NAA), and aspartate 495.

The protein belongs to the chaperonin (HSP60) family. In terms of assembly, forms a cylinder of 14 subunits composed of two heptameric rings stacked back-to-back. Interacts with the co-chaperonin GroES.

The protein localises to the cytoplasm. The catalysed reaction is ATP + H2O + a folded polypeptide = ADP + phosphate + an unfolded polypeptide.. Together with its co-chaperonin GroES, plays an essential role in assisting protein folding. The GroEL-GroES system forms a nano-cage that allows encapsulation of the non-native substrate proteins and provides a physical environment optimized to promote and accelerate protein folding. The sequence is that of Chaperonin GroEL from Cupriavidus taiwanensis (strain DSM 17343 / BCRC 17206 / CCUG 44338 / CIP 107171 / LMG 19424 / R1) (Ralstonia taiwanensis (strain LMG 19424)).